The primary structure comprises 348 residues: uncharacterized protein (348 aa).

The NADP(+) site is built by Lys41 and Tyr170. Ser339 bears the Phosphoserine mark.

Belongs to the NAD(P)-dependent epimerase/dehydratase family. Dihydroflavonol-4-reductase subfamily.

This is an uncharacterized protein from Saccharomyces cerevisiae (strain ATCC 204508 / S288c) (Baker's yeast).